The chain runs to 219 residues: Thymidylate kinase (219 aa).

9 to 16 (GIEGSGKT) contacts ATP.

Belongs to the thymidylate kinase family.

The enzyme catalyses dTMP + ATP = dTDP + ADP. Functionally, phosphorylation of dTMP to form dTDP in both de novo and salvage pathways of dTTP synthesis. This chain is Thymidylate kinase, found in Pelobacter propionicus (strain DSM 2379 / NBRC 103807 / OttBd1).